We begin with the raw amino-acid sequence, 172 residues long: Peptide methionine sulfoxide reductase MsrA (172 aa).

Cys12 is a catalytic residue.

Belongs to the MsrA Met sulfoxide reductase family.

The enzyme catalyses L-methionyl-[protein] + [thioredoxin]-disulfide + H2O = L-methionyl-(S)-S-oxide-[protein] + [thioredoxin]-dithiol. The catalysed reaction is [thioredoxin]-disulfide + L-methionine + H2O = L-methionine (S)-S-oxide + [thioredoxin]-dithiol. Functionally, has an important function as a repair enzyme for proteins that have been inactivated by oxidation. Catalyzes the reversible oxidation-reduction of methionine sulfoxide in proteins to methionine. In Ligilactobacillus salivarius (strain UCC118) (Lactobacillus salivarius), this protein is Peptide methionine sulfoxide reductase MsrA.